Consider the following 276-residue polypeptide: Urease accessory protein UreD (276 aa).

Belongs to the UreD family. UreD, UreF and UreG form a complex that acts as a GTP-hydrolysis-dependent molecular chaperone, activating the urease apoprotein by helping to assemble the nickel containing metallocenter of UreC. The UreE protein probably delivers the nickel.

Its subcellular location is the cytoplasm. Functionally, required for maturation of urease via the functional incorporation of the urease nickel metallocenter. The sequence is that of Urease accessory protein UreD from Polaromonas naphthalenivorans (strain CJ2).